The following is a 70-amino-acid chain: Envelope small membrane protein (70 aa).

Gly-2 carries the N-myristoyl glycine; by host lipid modification. Residues 2 to 15 (GSLWSKISQLFVDA) form an endoplasmic reticulum retention signal region. Residues 2 to 25 (GSLWSKISQLFVDAFTEFLVSVVD) lie on the Virion surface side of the membrane. A helical membrane pass occupies residues 26–46 (IAIFLAILFGFTVAGWLLVFL). Over 47-70 (LRVVCSALLRSRSAIHSPELSKVL) the chain is Intravirion.

Belongs to the arteriviridae E protein family. In terms of assembly, homooligomer. Associates with itself into higher-order structures, including dimers, trimers and tetramers. Associates with the GP2a-GP3-GP4 complex. In terms of processing, myristoylated. Post-translationally, not glycosylated.

The protein resides in the virion membrane. It localises to the host endoplasmic reticulum membrane. The protein localises to the host Golgi apparatus membrane. It is found in the secreted. Its function is as follows. Minor envelope protein. May function as a viroporin in the virion envelope that facilitates uncoating of the virus in order to release the genomic RNA into the cytoplasm for subsequent replication. The chain is Envelope small membrane protein (GP2b) from Sus scrofa (Pig).